Here is a 330-residue protein sequence, read N- to C-terminus: B-cell receptor CD22 (330 aa).

The first 17 residues, 1 to 17 (MHLLGPWLLLLEYLAFS), serve as a signal peptide directing secretion. Residues 18 to 136 (DSSKWAFEHP…MERIHLNVSE (119 aa)) form the Ig-like V-type domain. At 18-330 (DSSKWAFEHP…VFLQVQYAPE (313 aa)) the chain is on the extracellular side. Disulfide bonds link C37-C165, C42-C100, and C159-C217. N-linked (GlcNAc...) asparagine glycans are attached at residues N65, N99, and N110. R118 is a binding site for N-acetylneuraminate. 4 N-linked (GlcNAc...) asparagine glycosylation sites follow: N133, N162, N187, and N229. 2 Ig-like C2-type domains span residues 141 to 233 (PHIQ…DTVQ) and 240 to 324 (PKLK…VFLQ). Residues C263 and C307 are joined by a disulfide bond.

Belongs to the immunoglobulin superfamily. SIGLEC (sialic acid binding Ig-like lectin) family. Predominantly monomer of isoform CD22-beta. Also found as heterodimer of isoform CD22-beta and a shorter isoform. Interacts with PTPN6/SHP-1, LYN, SYK, PIK3R1/PIK3R2 and PLCG1 upon phosphorylation. Interacts with GRB2, INPP5D and SHC1 upon phosphorylation. May form a complex with INPP5D/SHIP, GRB2 and SHC1.

Its subcellular location is the cell membrane. Functionally, most highly expressed siglec (sialic acid-binding immunoglobulin-like lectin) on B-cells that plays a role in various aspects of B-cell biology including differentiation, antigen presentation, and trafficking to bone marrow. Binds to alpha 2,6-linked sialic acid residues of surface molecules such as CD22 itself, CD45 and IgM in a cis configuration. Can also bind to ligands on other cells as an adhesion molecule in a trans configuration. Acts as an inhibitory coreceptor on the surface of B-cells and inhibits B-cell receptor induced signaling, characterized by inhibition of the calcium mobilization and cellular activation. Mechanistically, the immunoreceptor tyrosine-based inhibitory motif domain is phosphorylated by the Src kinase LYN, which in turn leads to the recruitment of the protein tyrosine phosphatase 1/PTPN6, leading to the negative regulation of BCR signaling. If this negative signaling from is of sufficient strength, apoptosis of the B-cell can be induced. The chain is B-cell receptor CD22 from Pongo pygmaeus (Bornean orangutan).